We begin with the raw amino-acid sequence, 308 residues long: Ankyrin repeat and SOCS box protein 12 (308 aa).

ANK repeat units follow at residues 63-92 (IPGT…DVDS), 96-125 (KAQT…CPSG), 129-158 (NNCS…EANV), 171-200 (SCSG…DPDY), and 213-243 (QPRT…NIYL). The SOCS box domain occupies 268–308 (PRSLLSQTRLVIRRSLCRANQSQATDQLDIPPVLISYLKHQ).

The protein belongs to the ankyrin SOCS box (ASB) family. Interacts with CUL5 and RNF7.

The protein operates within protein modification; protein ubiquitination. Functionally, probable substrate-recognition component of a SCF-like ECS (Elongin-Cullin-SOCS-box protein) E3 ubiquitin-protein ligase complex which mediates the ubiquitination and subsequent proteasomal degradation of target proteins. The sequence is that of Ankyrin repeat and SOCS box protein 12 (Asb12) from Mus musculus (Mouse).